Here is a 298-residue protein sequence, read N- to C-terminus: Mitochondrial 2-oxodicarboxylate carrier (298 aa).

Solcar repeat units follow at residues 10–99 (HETS…YKKF), 106–195 (SPGL…VKNI), and 204–293 (LEFL…TYAW). The next 6 helical transmembrane spans lie at 16–36 (VAAGGSAGLVEICLMHPLDVV), 69–88 (FGFYKGIIPPILAETPKRAV), 112–132 (LIAGLGSGLTEAVVVNPFEVV), 166–186 (GLNKGLTATLGRHGIFNMVYF), 204–224 (LEFLRKFGIGFVSGTMGSVFN), and 276–296 (LGPGGGVMLLVYEYTYAWLQE).

It belongs to the mitochondrial carrier (TC 2.A.29) family.

It localises to the mitochondrion inner membrane. The enzyme catalyses 2-oxoadipate(in) + 2-oxoglutarate(out) = 2-oxoadipate(out) + 2-oxoglutarate(in). The catalysed reaction is hexanedioate(in) + 2-oxoglutarate(out) = hexanedioate(out) + 2-oxoglutarate(in). It carries out the reaction L-2-aminoadipate(in) + 2-oxoglutarate(out) = L-2-aminoadipate(out) + 2-oxoglutarate(in). It catalyses the reaction glutarate(in) + 2-oxoglutarate(out) = glutarate(out) + 2-oxoglutarate(in). The enzyme catalyses 2-oxoheptanedioate(in) + 2-oxoglutarate(out) = 2-oxoheptanedioate(out) + 2-oxoglutarate(in). The catalysed reaction is heptanedioate(in) + 2-oxoglutarate(out) = heptanedioate(out) + 2-oxoglutarate(in). It carries out the reaction citrate(in) + 2-oxoglutarate(out) = citrate(out) + 2-oxoglutarate(in). Its function is as follows. Transports dicarboxylates across the inner membranes of mitochondria by a counter-exchange mechanism. Can transport 2-oxoadipate (2-oxohexanedioate), 2-oxoglutarate, adipate (hexanedioate), glutarate, and to a lesser extent, pimelate (heptanedioate), 2-oxopimelate (2-oxoheptanedioate), 2-aminoadipate (2-aminohexanedioate), oxaloacetate, and citrate. Plays a central role in catabolism of lysine, hydroxylysine, and tryptophan, by transporting common metabolite intermediates (such as 2-oxoadipate) into the mitochondria, where it is converted into acetyl-CoA and can enter the citric acid (TCA) cycle. This is Mitochondrial 2-oxodicarboxylate carrier (Slc25a21) from Mus musculus (Mouse).